We begin with the raw amino-acid sequence, 355 residues long: Carbohydrate sulfotransferase 10 (355 aa).

The Cytoplasmic portion of the chain corresponds to 1-6; that stretch reads MHHRWL. The chain crosses the membrane as a helical; Signal-anchor for type II membrane protein span at residues 7–27; the sequence is LLVACFWVLFMLMVASKLITL. The Lumenal segment spans residues 28–355; it reads TMKDPEGYGN…FGYKEPTFLF (328 aa). N-linked (GlcNAc...) asparagine glycans are attached at residues N93 and N98. Residues 126–132 and 188–196 each bind 3'-phosphoadenylyl sulfate; these read PKVGNTQ and RDPFERLIS. N316 carries N-linked (GlcNAc...) asparagine glycosylation.

Belongs to the sulfotransferase 2 family.

It localises to the golgi apparatus membrane. In terms of biological role, catalyzes the transfer of sulfate to position 3 of terminal glucuronic acid of both protein- and lipid-linked oligosaccharides. Participates in biosynthesis of HNK-1 carbohydrate structure, a sulfated glucuronyl-lactosaminyl residue carried by many neural recognition molecules. In Xenopus laevis (African clawed frog), this protein is Carbohydrate sulfotransferase 10 (chst10).